A 200-amino-acid polypeptide reads, in one-letter code: Molybdenum cofactor guanylyltransferase (200 aa).

GTP-binding positions include 10–12 (LAG), lysine 23, asparagine 51, aspartate 69, and aspartate 99. Aspartate 99 provides a ligand contact to Mg(2+).

It belongs to the MobA family. In terms of assembly, monomer. Mg(2+) serves as cofactor.

Its subcellular location is the cytoplasm. The enzyme catalyses Mo-molybdopterin + GTP + H(+) = Mo-molybdopterin guanine dinucleotide + diphosphate. In terms of biological role, transfers a GMP moiety from GTP to Mo-molybdopterin (Mo-MPT) cofactor (Moco or molybdenum cofactor) to form Mo-molybdopterin guanine dinucleotide (Mo-MGD) cofactor. The sequence is that of Molybdenum cofactor guanylyltransferase from Shewanella pealeana (strain ATCC 700345 / ANG-SQ1).